The following is a 295-amino-acid chain: WHI2-like protein P4H10.16c (295 aa).

It belongs to the WHI2 family.

It is found in the cytoplasm. The protein resides in the nucleus. This is WHI2-like protein P4H10.16c from Schizosaccharomyces pombe (strain 972 / ATCC 24843) (Fission yeast).